Here is a 334-residue protein sequence, read N- to C-terminus: Ketol-acid reductoisomerase (NADP(+)) (334 aa).

In terms of domain architecture, KARI N-terminal Rossmann spans 1 to 181 (MNIYYDKNAD…GGGRTGILET (181 aa)). Residues 24–27 (YGSQ), R47, S50, S52, and 82–85 (DEFQ) each bind NADP(+). The active site involves H107. G133 contacts NADP(+). The 142-residue stretch at 182–323 (SFKDETETDL…ESLRSMMPWI (142 aa)) folds into the KARI C-terminal knotted domain. The Mg(2+) site is built by D190, E194, E226, and E230. Residue S251 participates in substrate binding.

It belongs to the ketol-acid reductoisomerase family. Mg(2+) is required as a cofactor.

The enzyme catalyses (2R)-2,3-dihydroxy-3-methylbutanoate + NADP(+) = (2S)-2-acetolactate + NADPH + H(+). The catalysed reaction is (2R,3R)-2,3-dihydroxy-3-methylpentanoate + NADP(+) = (S)-2-ethyl-2-hydroxy-3-oxobutanoate + NADPH + H(+). The protein operates within amino-acid biosynthesis; L-isoleucine biosynthesis; L-isoleucine from 2-oxobutanoate: step 2/4. It participates in amino-acid biosynthesis; L-valine biosynthesis; L-valine from pyruvate: step 2/4. In terms of biological role, involved in the biosynthesis of branched-chain amino acids (BCAA). Catalyzes an alkyl-migration followed by a ketol-acid reduction of (S)-2-acetolactate (S2AL) to yield (R)-2,3-dihydroxy-isovalerate. In the isomerase reaction, S2AL is rearranged via a Mg-dependent methyl migration to produce 3-hydroxy-3-methyl-2-ketobutyrate (HMKB). In the reductase reaction, this 2-ketoacid undergoes a metal-dependent reduction by NADPH to yield (R)-2,3-dihydroxy-isovalerate. This Vesicomyosocius okutanii subsp. Calyptogena okutanii (strain HA) protein is Ketol-acid reductoisomerase (NADP(+)).